The sequence spans 102 residues: Large ribosomal subunit protein bL28 (102 aa).

Belongs to the bacterial ribosomal protein bL28 family.

This Bradyrhizobium diazoefficiens (strain JCM 10833 / BCRC 13528 / IAM 13628 / NBRC 14792 / USDA 110) protein is Large ribosomal subunit protein bL28.